The primary structure comprises 335 residues: Methionine import ATP-binding protein MetN 2 (335 aa).

In terms of domain architecture, ABC transporter spans 2–242 (IEFHDVHKTY…PQHPTTRRFV (241 aa)). 38-45 (GHSGAGKS) provides a ligand contact to ATP.

It belongs to the ABC transporter superfamily. Methionine importer (TC 3.A.1.24) family. The complex is composed of two ATP-binding proteins (MetN), two transmembrane proteins (MetI) and a solute-binding protein (MetQ).

It localises to the cell inner membrane. It carries out the reaction L-methionine(out) + ATP + H2O = L-methionine(in) + ADP + phosphate + H(+). It catalyses the reaction D-methionine(out) + ATP + H2O = D-methionine(in) + ADP + phosphate + H(+). In terms of biological role, part of the ABC transporter complex MetNIQ involved in methionine import. Responsible for energy coupling to the transport system. The sequence is that of Methionine import ATP-binding protein MetN 2 from Pseudomonas aeruginosa (strain UCBPP-PA14).